The following is a 664-amino-acid chain: MEGIDHLADERNKAEFDVEDMKIVWAGSRHAFEVSDRIARLVASDPVFEKSNRARLSRKELFKSTLRKCAHAFKRIIELRLNEEEAGRLRHFIDQPAYVDLHWGMFVPAIKGQGTEEQQKKWLSLANKMQIIGCYAQTELGHGSNVQGLETTATFDPKTDEFVIHTPTQTASKWWPGGLGKVSTHAVVYARLITNGKDYGIHGFIVQLRSLEDHSPLPNITVGDIGTKMGNGAYNSMDNGFLMFDHVRIPRDQMLMRLSKVTREGEYVPSDVPKQLVYGTMVYVRQTIVADASNALSRAVCIATRYSAVRRQFGAHNGGIETQVIDYKTQQNRLFPLLASAYAFRFVGEWLKWLYTDVTERLAASDFATLPEAHACTAGLKSLTTTATADGIEECRKLCGGHGYLWCSGLPELFAVYVPACTYEGDNVVLQLQVARFLMKTVAQLGSGKVPVGTTAYMGRAAHLLQCRSGVQKAEDWLNPDVVLEAFEARALRMAVTCAKNLSKFENQEQGFQELLADLVEAAIAHCQLIVVSKFIAKLEQDIGGKGVKKQLNNLCYIYALYLLHKHLGDFLSTNCITPKQASLANDQLRSLYTQVRPNAVALVDAFNYTDHYLNSVLGRYDGNVYPKLFEEALKDPLNDSVVPDGYQEYLRPVLQQQLRTARL.

The FAD site is built by Tyr-135, Gln-137, Thr-138, Ser-144, Gly-177, Arg-310, Gln-330, Arg-333, Gly-401, and Thr-422. Glu-424 (proton acceptor) is an active-site residue. An FAD-binding site is contributed by Asp-426. A disulfide bond links Cys-467 and Cys-576. The Microbody targeting signal motif lies at 662–664; it reads ARL.

It belongs to the acyl-CoA oxidase family. In terms of assembly, homodimer. FAD is required as a cofactor. In terms of tissue distribution, expressed mainly in flowers and young seedlings. Lower expression in roots, leaves and bracts.

It localises to the peroxisome. It carries out the reaction a 2,3-saturated acyl-CoA + O2 = a (2E)-enoyl-CoA + H2O2. Functionally, catalyzes the desaturation of both long- and medium-chain acyl-CoAs to 2-trans-enoyl-CoAs. Most active with C14-CoA. Activity on long-chain mono-unsaturated substrates is 40% higher than with the corresponding saturated substrates. Seems to be an important factor in the general metabolism of root tips. May be involved in the biosynthesis of jasmonic acid. The chain is Peroxisomal acyl-coenzyme A oxidase 1 from Arabidopsis thaliana (Mouse-ear cress).